Consider the following 432-residue polypeptide: Cyclic GMP-AMP synthase (432 aa).

Residue 110–115 (QGSFQY) participates in GTP binding. Residues Asp129 and Asp131 each contribute to the Mg(2+) site. Arg180 is a binding site for ATP. Asp191 lines the Mg(2+) pocket. An ATP-binding site is contributed by Ser255. 3 residues coordinate GTP: Lys283, Ser297, and Asp344. Positions 413–432 (LNAPSKEPSSKPINKTMVSG) are disordered. Residues 423–432 (KPINKTMVSG) show a composition bias toward polar residues.

The protein belongs to the CD-NTase family. A01 subfamily. Mg(2+) serves as cofactor.

The enzyme catalyses GTP + ATP = 3',3'-cGAMP + 2 diphosphate. Its function is as follows. Cyclic nucleotide synthase (second messenger synthase) of a CBASS antivirus system. CBASS (cyclic oligonucleotide-based antiphage signaling system) provides immunity against bacteriophage. The CD-NTase protein synthesizes cyclic nucleotides in response to infection; these serve as specific second messenger signals. The signals activate a diverse range of effectors, leading to bacterial cell death and thus abortive phage infection. A type II-C(GA) CBASS system. Catalyzes the synthesis of 3'3'-cyclic GMP-AMP (3'3'-cGAMP) from GTP and ATP, a second messenger in cell signal transduction. Is also able to produce c-di-AMP and c-di-GMP from ATP and GTP, respectively; however, 3'3'-cGAMP is the dominant molecule produced by DncV in vivo, contrary to the 2'3'-cGAMP produced by eukaryotes. By producing cGAMP, down-regulates csgD expression and expression of flagellum regulon genes, which leads to the down-regulation of rdar biofilm formation and flagellum-mediated swimming and swarming motility in a temperature-dependent manner. Controls the activity of cGAMP-activated phospholipase CapV, a patatin-like lipase that is a direct 3',3'-cGAMP receptor encoded in the dncV operon. This is Cyclic GMP-AMP synthase from Escherichia coli.